The primary structure comprises 309 residues: Protein FdhE (309 aa).

Belongs to the FdhE family.

The protein localises to the cytoplasm. In terms of biological role, necessary for formate dehydrogenase activity. This chain is Protein FdhE, found in Escherichia coli O127:H6 (strain E2348/69 / EPEC).